The sequence spans 104 residues: Large ribosomal subunit protein bL21 (104 aa).

Belongs to the bacterial ribosomal protein bL21 family. In terms of assembly, part of the 50S ribosomal subunit. Contacts protein L20.

In terms of biological role, this protein binds to 23S rRNA in the presence of protein L20. This is Large ribosomal subunit protein bL21 from Nitrosococcus oceani (strain ATCC 19707 / BCRC 17464 / JCM 30415 / NCIMB 11848 / C-107).